The chain runs to 323 residues: CD-NTase-associated protein 12 (323 aa).

Positions R4–T120 constitute a TIR domain. E84 is a catalytic residue. Positions S154–L323 are STING domain. Positions 164, 165, 234, 237, 259, 262, and 263 each coordinate 3',3'-c-di-GMP.

The protein in the C-terminal section; belongs to the bacterial STING family. As to quaternary structure, forms homodimers which subsequently form filaments. In vitro in the presence of c-di-GMP forms filaments up to 300 nm in length with an ordered array of parallel-stacked subunits, where the TIR domains form one face of the filament and the STING domains form the other face. Antiparallel double-filament structures are also seen. 3'3'-cGAMP weakly induces filament formation, while 2'3'-cGAMP does not.

It catalyses the reaction NAD(+) + H2O = ADP-D-ribose + nicotinamide + H(+). NAD(+) hydrolase activity is strongly stimulated by c-di-GMP, weakly by 3'3'-cGAMP, very weakly by c-di-AMP and not at all by 2'3'-cGAMP. Self-association of TIR domains is required for NADase activity. Effector protein of a CBASS antiviral system with NAD(+) hydrolase activity. CBASS (cyclic oligonucleotide-based antiphage signaling system) provides immunity against bacteriophage. The CD-NTase protein synthesizes cyclic nucleotides in response to infection; these serve as specific second messenger signals. The signals activate a diverse range of effectors, leading to bacterial cell death and thus abortive phage infection. A type I-D(GG) CBASS system. Its function is as follows. Upon activation by 3'3'-c-di-GMP forms filaments which hydrolyze NAD(+); filament formation is required for enzyme activation. Induction in an E.coli strain that synthesizes c-di-GMP leads to significant growth inhibition. Binds c-di-GMP and 3'3'-cGAMP (3'3'-cyclic GMP-AMP), but not c-di-AMP, 2'3'-cGAMP or cUMP-AMP. This chain is CD-NTase-associated protein 12, found in Sphingobacterium faecium (strain DSM 11690 / JCM 21820 / NBRC 15299 / NCIMB 13408 / KS 0470).